The sequence spans 312 residues: Methionyl-tRNA formyltransferase (312 aa).

Position 112–115 (112–115) interacts with (6S)-5,6,7,8-tetrahydrofolate; the sequence is SLLP.

It belongs to the Fmt family.

The catalysed reaction is L-methionyl-tRNA(fMet) + (6R)-10-formyltetrahydrofolate = N-formyl-L-methionyl-tRNA(fMet) + (6S)-5,6,7,8-tetrahydrofolate + H(+). Its function is as follows. Attaches a formyl group to the free amino group of methionyl-tRNA(fMet). The formyl group appears to play a dual role in the initiator identity of N-formylmethionyl-tRNA by promoting its recognition by IF2 and preventing the misappropriation of this tRNA by the elongation apparatus. The sequence is that of Methionyl-tRNA formyltransferase from Dehalococcoides mccartyi (strain ATCC BAA-2266 / KCTC 15142 / 195) (Dehalococcoides ethenogenes (strain 195)).